A 209-amino-acid chain; its full sequence is uncharacterized protein (209 aa).

Disordered stretches follow at residues 1 to 80 (MFVR…PPVE) and 164 to 197 (LPAG…PGME). The segment covering 178-189 (SRGSSRSSCSQR) has biased composition (low complexity).

This is an uncharacterized protein from Homo sapiens (Human).